Consider the following 29-residue polypeptide: Dermaseptin-J8 (29 aa).

As to expression, expressed by the skin glands.

The protein resides in the secreted. Its function is as follows. Has antimicrobial activity. The protein is Dermaseptin-J8 of Phasmahyla jandaia (Jandaia leaf frog).